An 861-amino-acid chain; its full sequence is Leucine--tRNA ligase (861 aa).

Positions 42–52 (PYPSGKLHMGH) match the 'HIGH' region motif. A 'KMSKS' region motif is present at residues 620–624 (KMSKS). Lys-623 contacts ATP.

Belongs to the class-I aminoacyl-tRNA synthetase family.

Its subcellular location is the cytoplasm. The enzyme catalyses tRNA(Leu) + L-leucine + ATP = L-leucyl-tRNA(Leu) + AMP + diphosphate. In Buchnera aphidicola subsp. Schizaphis graminum (strain Sg), this protein is Leucine--tRNA ligase.